The chain runs to 198 residues: HTH-type transcriptional regulator BetI (198 aa).

One can recognise an HTH tetR-type domain in the interval 8–68; sequence PIRRQQLIEA…ATMRYLIRHL (61 aa). Residues 31–50 constitute a DNA-binding region (H-T-H motif); that stretch reads SIAQIAKRAGVSNGIISHYF.

It functions in the pathway amine and polyamine biosynthesis; betaine biosynthesis via choline pathway [regulation]. Repressor involved in the biosynthesis of the osmoprotectant glycine betaine. It represses transcription of the choline transporter BetT and the genes of BetAB involved in the synthesis of glycine betaine. The protein is HTH-type transcriptional regulator BetI of Yersinia pseudotuberculosis serotype O:1b (strain IP 31758).